Reading from the N-terminus, the 121-residue chain is Protransforming growth factor alpha (121 aa).

Residue L1 is a signal peptide. A propeptide spans 2 to 16 (ENSTSLLSDPPVAAA) (removed in mature form). Topologically, residues 2-75 (ENSTSLLSDP…AVVAASQKKQ (74 aa)) are extracellular. N3 is a glycosylation site (N-linked (GlcNAc...) asparagine). The EGF-like domain maps to 20–60 (HFNDCPDSHTQFCFHGTCRFLVQEDRPACVCHSGYVGARCE). 3 disulfide bridges follow: C24-C37, C32-C48, and C50-C59. The propeptide at 67–121 (VVAASQKKQAITALVVVSIVALAVLIITCVLIHCCQVRKHCEWCRALICRHEKPS) is removed in mature form. Residues 76-101 (AITALVVVSIVALAVLIITCVLIHCC) form a helical membrane-spanning segment.

In terms of assembly, interacts with the PDZ domains of MAGI3, SDCBP and SNTA1. The interaction with SDCBP, is required for the targeting to the cell surface. In the endoplasmic reticulum, in its immature form (i.e. with a prosegment and lacking full N-glycosylation), interacts with CNIH. In the Golgi apparatus, may form a complex with CNIH and GORASP2. Interacts (via cytoplasmic C-terminal domain) with NKD2. As to expression, hypothalamus.

The protein localises to the secreted. Its subcellular location is the extracellular space. It localises to the cell membrane. Functionally, TGF alpha is a mitogenic polypeptide that is able to bind to the EGF receptor/EGFR and to act synergistically with TGF beta to promote anchorage-independent cell proliferation in soft agar. This Macaca mulatta (Rhesus macaque) protein is Protransforming growth factor alpha (TGFA).